The primary structure comprises 514 residues: Glutathione-binding protein GsiB (514 aa).

A signal peptide spans 1 to 26 (MARAVHRSGLVALGIATALMASCAFA).

Belongs to the bacterial solute-binding protein 5 family. As to quaternary structure, the complex is composed of two ATP-binding proteins (GsiA), two transmembrane proteins (GsiC and GsiD) and a solute-binding protein (GsiB).

It is found in the periplasm. Part of the ABC transporter complex GsiABCD involved in glutathione import. Binds glutathione. The chain is Glutathione-binding protein GsiB from Shigella flexneri serotype 5b (strain 8401).